We begin with the raw amino-acid sequence, 359 residues long: Bergaptol O-methyltransferase (359 aa).

Histidine 126 lines the bergaptol pocket. Residues serine 179, glycine 203, aspartate 226, aspartate 246, and lysine 260 each coordinate S-adenosyl-L-homocysteine. Histidine 264 contacts bergaptol. The Proton acceptor role is filled by histidine 264.

The protein belongs to the class I-like SAM-binding methyltransferase superfamily. Cation-independent O-methyltransferase family. COMT subfamily.

It carries out the reaction a 5-hydroxyfurocoumarin + S-adenosyl-L-methionine = a 5-methoxyfurocoumarin + S-adenosyl-L-homocysteine + H(+). It catalyses the reaction bergaptol + S-adenosyl-L-methionine = bergapten + S-adenosyl-L-homocysteine. Its activity is regulated as follows. Inhibited by Cu(2+), Ni(2+) and Co(2+). The sequence is that of Bergaptol O-methyltransferase from Glehnia littoralis (Beach silvertop).